Here is a 227-residue protein sequence, read N- to C-terminus: Cytochrome c oxidase subunit 2 (227 aa).

Residues 1–14 (MPYPMQLGFQDATS) lie on the Mitochondrial intermembrane side of the membrane. Residues 15–45 (PIMEELTYFHDHTLMIVFLISSLVLYIIILM) form a helical membrane-spanning segment. Topologically, residues 46 to 59 (LTTKLTHTSTMDAQ) are mitochondrial matrix. The helical transmembrane segment at 60–87 (EVETIWTILPAVILVLIALPSLRILYMM) threads the bilayer. The Mitochondrial intermembrane portion of the chain corresponds to 88–227 (DEIYNPYLTI…YFEKWSSMMQ (140 aa)). H161, C196, E198, C200, H204, and M207 together coordinate Cu cation. Position 198 (E198) interacts with Mg(2+). Y218 is modified (phosphotyrosine).

The protein belongs to the cytochrome c oxidase subunit 2 family. As to quaternary structure, component of the cytochrome c oxidase (complex IV, CIV), a multisubunit enzyme composed of 14 subunits. The complex is composed of a catalytic core of 3 subunits MT-CO1, MT-CO2 and MT-CO3, encoded in the mitochondrial DNA, and 11 supernumerary subunits COX4I, COX5A, COX5B, COX6A, COX6B, COX6C, COX7A, COX7B, COX7C, COX8 and NDUFA4, which are encoded in the nuclear genome. The complex exists as a monomer or a dimer and forms supercomplexes (SCs) in the inner mitochondrial membrane with NADH-ubiquinone oxidoreductase (complex I, CI) and ubiquinol-cytochrome c oxidoreductase (cytochrome b-c1 complex, complex III, CIII), resulting in different assemblies (supercomplex SCI(1)III(2)IV(1) and megacomplex MCI(2)III(2)IV(2)). Found in a complex with TMEM177, COA6, COX18, COX20, SCO1 and SCO2. Interacts with TMEM177 in a COX20-dependent manner. Interacts with COX20. Interacts with COX16. Requires Cu cation as cofactor.

It is found in the mitochondrion inner membrane. It carries out the reaction 4 Fe(II)-[cytochrome c] + O2 + 8 H(+)(in) = 4 Fe(III)-[cytochrome c] + 2 H2O + 4 H(+)(out). Its function is as follows. Component of the cytochrome c oxidase, the last enzyme in the mitochondrial electron transport chain which drives oxidative phosphorylation. The respiratory chain contains 3 multisubunit complexes succinate dehydrogenase (complex II, CII), ubiquinol-cytochrome c oxidoreductase (cytochrome b-c1 complex, complex III, CIII) and cytochrome c oxidase (complex IV, CIV), that cooperate to transfer electrons derived from NADH and succinate to molecular oxygen, creating an electrochemical gradient over the inner membrane that drives transmembrane transport and the ATP synthase. Cytochrome c oxidase is the component of the respiratory chain that catalyzes the reduction of oxygen to water. Electrons originating from reduced cytochrome c in the intermembrane space (IMS) are transferred via the dinuclear copper A center (CU(A)) of subunit 2 and heme A of subunit 1 to the active site in subunit 1, a binuclear center (BNC) formed by heme A3 and copper B (CU(B)). The BNC reduces molecular oxygen to 2 water molecules using 4 electrons from cytochrome c in the IMS and 4 protons from the mitochondrial matrix. The polypeptide is Cytochrome c oxidase subunit 2 (MT-CO2) (Osphranter robustus (Wallaroo)).